Consider the following 109-residue polypeptide: SKSSTETPPSYNQLNYNENLQRFFNSKPITAPVDVDPHEVEQSYDASTDARSFRSPLRHFEGSGGSGSSGNFNSGSNLHIGSITNTSNTGTGTSSGSVQLITLTESLLN.

The tract at residues 29–100 (ITAPVDVDPH…TGTSSGSVQL (72 aa)) is disordered. Positions 69–97 (SGNFNSGSNLHIGSITNTSNTGTGTSSGS) are enriched in low complexity.

In terms of assembly, forms a heterodimer with timeless (TIM); the complex then translocates into the nucleus. Phosphorylated with a circadian rhythmicity, probably by the double-time protein (dbt). Phosphorylation could be implicated in the stability of per monomer and in the formation of heterodimer per-tim.

The protein resides in the nucleus. It localises to the cytoplasm. The protein localises to the perinuclear region. In terms of biological role, essential for biological clock functions. Determines the period length of circadian and ultradian rhythms; an increase in PER dosage leads to shortened circadian rhythms and a decrease leads to lengthened circadian rhythms. Essential for the circadian rhythmicity of locomotor activity, eclosion behavior, and for the rhythmic component of the male courtship song that originates in the thoracic nervous system. The biological cycle depends on the rhythmic formation and nuclear localization of the TIM-PER complex. Light induces the degradation of TIM, which promotes elimination of PER. Nuclear activity of the heterodimer coordinatively regulates PER and TIM transcription through a negative feedback loop. Behaves as a negative element in circadian transcriptional loop. Does not appear to bind DNA, suggesting indirect transcriptional inhibition. This Loxocera albiseta (Rust fly) protein is Period circadian protein (per).